We begin with the raw amino-acid sequence, 87 residues long: Small ribosomal subunit protein bS20 (87 aa).

Residues 1–22 show a composition bias toward basic residues; it reads MANIKSAKKRAVQSEKRRKHNA. Positions 1–27 are disordered; the sequence is MANIKSAKKRAVQSEKRRKHNASSRSM.

The protein belongs to the bacterial ribosomal protein bS20 family.

Binds directly to 16S ribosomal RNA. The protein is Small ribosomal subunit protein bS20 of Pectobacterium atrosepticum (strain SCRI 1043 / ATCC BAA-672) (Erwinia carotovora subsp. atroseptica).